The sequence spans 131 residues: uncharacterized protein (131 aa).

The interval 16–71 (MSEQERDEVLEDDDDDEDNKSSQQERDEFVEDDDNNSIQSSPSCAQPLLTQYHDDG) is disordered. Positions 20–33 (ERDEVLEDDDDDED) are enriched in acidic residues.

This is an uncharacterized protein from Dictyostelium discoideum (Social amoeba).